The sequence spans 205 residues: Recombination protein RecR (205 aa).

Residues 58–75 form a C4-type zinc finger; it reads CSLCQNVTDKEIDPCNIC. A Toprim domain is found at 83–182; that stretch reads RVVCVVEAPN…KVTRIARGIP (100 aa).

This sequence belongs to the RecR family.

May play a role in DNA repair. It seems to be involved in an RecBC-independent recombinational process of DNA repair. It may act with RecF and RecO. The chain is Recombination protein RecR from Chloroherpeton thalassium (strain ATCC 35110 / GB-78).